The following is a 400-amino-acid chain: Phosphoglycerate kinase (400 aa).

Substrate contacts are provided by residues 23 to 25 (DLN), Arg-38, 61 to 64 (HFGR), Arg-120, and Arg-153. Residues Lys-203, Glu-325, and 355 to 358 (GGDT) contribute to the ATP site.

The protein belongs to the phosphoglycerate kinase family. In terms of assembly, monomer.

The protein resides in the cytoplasm. The catalysed reaction is (2R)-3-phosphoglycerate + ATP = (2R)-3-phospho-glyceroyl phosphate + ADP. Its pathway is carbohydrate degradation; glycolysis; pyruvate from D-glyceraldehyde 3-phosphate: step 2/5. The protein is Phosphoglycerate kinase of Agrobacterium fabrum (strain C58 / ATCC 33970) (Agrobacterium tumefaciens (strain C58)).